We begin with the raw amino-acid sequence, 406 residues long: Digeranylgeranylglycerophospholipid reductase 2 (406 aa).

Residues glycine 15, glutamate 34, cysteine 45, alanine 46, glycine 48, arginine 99, alanine 123, aspartate 279, glycine 291, and isoleucine 292 each coordinate FAD.

It belongs to the geranylgeranyl reductase family. DGGGPL reductase subfamily. Requires FAD as cofactor.

The enzyme catalyses a 2,3-bis-O-phytanyl-sn-glycerol 1-phospholipid + 8 oxidized 2[4Fe-4S]-[ferredoxin] = a 2,3-bis-O-(geranylgeranyl)-sn-glycerol 1-phospholipid + 8 reduced 2[4Fe-4S]-[ferredoxin] + 16 H(+). The catalysed reaction is 2,3-bis-O-(phytanyl)-sn-glycerol 1-phosphate + 8 oxidized 2[4Fe-4S]-[ferredoxin] = 2,3-bis-O-(geranylgeranyl)-sn-glycerol 1-phosphate + 8 reduced 2[4Fe-4S]-[ferredoxin] + 16 H(+). It carries out the reaction a 2,3-bis-O-phytanyl-sn-glycerol 1-phospholipid + 8 A = a 2,3-bis-O-(geranylgeranyl)-sn-glycerol 1-phospholipid + 8 AH2. It catalyses the reaction CDP-2,3-bis-O-(geranylgeranyl)-sn-glycerol + 8 AH2 = CDP-2,3-bis-O-(phytanyl)-sn-glycerol + 8 A. The enzyme catalyses archaetidylserine + 8 AH2 = 2,3-bis-O-phytanyl-sn-glycero-3-phospho-L-serine + 8 A. It participates in membrane lipid metabolism; glycerophospholipid metabolism. In terms of biological role, is involved in the reduction of 2,3-digeranylgeranylglycerophospholipids (unsaturated archaeols) into 2,3-diphytanylglycerophospholipids (saturated archaeols) in the biosynthesis of archaeal membrane lipids. Catalyzes the formation of archaetidic acid (2,3-di-O-phytanyl-sn-glyceryl phosphate) from 2,3-di-O-geranylgeranylglyceryl phosphate (DGGGP) via the hydrogenation of each double bond of the isoprenoid chains. Is also probably able to reduce double bonds of geranyl groups in CDP-2,3-bis-O-(geranylgeranyl)-sn-glycerol and archaetidylserine, thus acting at various stages in the biosynthesis of archaeal membrane lipids. The protein is Digeranylgeranylglycerophospholipid reductase 2 of Methanococcoides burtonii (strain DSM 6242 / NBRC 107633 / OCM 468 / ACE-M).